The chain runs to 202 residues: Endoribonuclease YbeY (202 aa).

Zn(2+) contacts are provided by H120, H124, and H130.

The protein belongs to the endoribonuclease YbeY family. Requires Zn(2+) as cofactor.

It localises to the cytoplasm. Its function is as follows. Single strand-specific metallo-endoribonuclease involved in late-stage 70S ribosome quality control and in maturation of the 3' terminus of the 16S rRNA. The polypeptide is Endoribonuclease YbeY (Corynebacterium kroppenstedtii (strain DSM 44385 / JCM 11950 / CIP 105744 / CCUG 35717)).